The chain runs to 526 residues: Microphthalmia-associated transcription factor (526 aa).

Residues Met-1–Thr-54 are disordered. Ser-5 is modified (phosphoserine; by MTOR). Residues Glu-15–Tyr-25 are compositionally biased toward basic and acidic residues. Residues Pro-41 to Thr-54 are compositionally biased toward low complexity. Ser-180 bears the Phosphoserine; by MAPK mark. The transactivation stretch occupies residues Asp-224–Cys-295. Ser-280 is modified (phosphoserine; by MARK3). Residue Lys-289 forms a Glycyl lysine isopeptide (Lys-Gly) (interchain with G-Cter in SUMO) linkage. In terms of domain architecture, bHLH spans Gln-311–Leu-364. Residues Lys-355–His-402 are a coiled coil. The tract at residues Leu-374–Leu-395 is leucine-zipper. Residues Ala-401–Cys-431 are DNA-binding regulation. Ser-405 carries the phosphoserine; by GSK3 modification. Ser-414 carries the phosphoserine modification. A Glycyl lysine isopeptide (Lys-Gly) (interchain with G-Cter in SUMO) cross-link involves residue Lys-423. A Phosphoserine modification is found at Ser-491. The disordered stretch occupies residues Thr-496–Cys-526. Residues Leu-499–Lys-509 are compositionally biased toward polar residues. Position 516 is a phosphoserine; by RPS6KA1 (Ser-516).

Belongs to the MiT/TFE family. As to quaternary structure, homodimer or heterodimer; dimerization is mediated via the coiled coil region. Efficient DNA binding requires dimerization with another bHLH protein. Binds DNA in the form of homodimer or heterodimer with either TFE3, TFEB or TFEC. Interacts with small GTPases Rag (RagA/RRAGA, RagB/RRAGB, RagC/RRAGC and/or RagD/RRAGD); promoting its recruitment to lysosomal membrane in the presence of nutrients. Interacts with KARS1. Identified in a complex with HINT1 and CTNNB1. Interacts with VSX2. Post-translationally, when nutrients are present, phosphorylation by MTOR at Ser-5 via non-canonical mTORC1 pathway promotes ubiquitination by the SCF(BTRC) complex, followed by degradation. Phosphorylation at Ser-405 significantly enhances the ability to bind the tyrosinase promoter. Phosphorylation by MARK3/cTAK1 at Ser-280 promotes association with 14-3-3/YWHA adapters and retention in the cytosol. Phosphorylated at Ser-180 and Ser-516 following KIT signaling, triggering a short live activation: Phosphorylation at Ser-180 and Ser-516 by MAPK and RPS6KA1, respectively, activate the transcription factor activity but also promote ubiquitination and subsequent degradation by the proteasome. Phosphorylated in response to blue light (415nm). Ubiquitinated by the SCF(BTRC) and SCF(FBXW11) complexes following phosphorylation ar Ser-5 by MTOR, leading to its degradation by the proteasome. Ubiquitinated following phosphorylation at Ser-180, leading to subsequent degradation by the proteasome. Deubiquitinated by USP13, preventing its degradation. Expressed in melanocytes (at protein level). In terms of tissue distribution, expressed in the retinal pigment epithelium, brain, and placenta. Expressed in the kidney. As to expression, expressed in the kidney and retinal pigment epithelium. Expressed in the kidney. In terms of tissue distribution, expressed in melanocytes.

The protein resides in the nucleus. The protein localises to the cytoplasm. It is found in the lysosome membrane. Transcription factor that acts as a master regulator of melanocyte survival and differentiation as well as melanosome biogenesis. Binds to M-boxes (5'-TCATGTG-3') and symmetrical DNA sequences (E-boxes) (5'-CACGTG-3') found in the promoter of pigmentation genes, such as tyrosinase (TYR). Involved in the cellular response to amino acid availability by acting downstream of MTOR: in the presence of nutrients, MITF phosphorylation by MTOR promotes its inactivation. Upon starvation or lysosomal stress, inhibition of MTOR induces MITF dephosphorylation, resulting in transcription factor activity. Plays an important role in melanocyte development by regulating the expression of tyrosinase (TYR) and tyrosinase-related protein 1 (TYRP1). Plays a critical role in the differentiation of various cell types, such as neural crest-derived melanocytes, mast cells, osteoclasts and optic cup-derived retinal pigment epithelium. This Homo sapiens (Human) protein is Microphthalmia-associated transcription factor.